The sequence spans 296 residues: MAVLAPLIALVYSVPRLSRWLAQPYYLLSALLSAAFLLVRKLPPLCHGLPTQREDGNPCDFDWREVEILMFLSAIVMMKNRRSITVEQHIGNIFMFSKVANAILFFRLDIRMGLLYITLCIVFLMTCEPPLYMGPEYIKYFNDKTIDEELERDKKVTWIVEFFANWSNDCQSFAPIYADLSLKYNCTGLNFGKVDVGRYTDVSMRYKVSTSPLTKQLPTLILFQGGKEVMRRPQIDKKGRAVSWTFSEENVIREFNLNELYQRAKKPSKAGDSIPEEQPVASAPTTVSDGENKKDK.

The signal sequence occupies residues 1 to 48; it reads MAVLAPLIALVYSVPRLSRWLAQPYYLLSALLSAAFLLVRKLPPLCHG. The Extracellular portion of the chain corresponds to 49–102; sequence LPTQREDGNPCDFDWREVEILMFLSAIVMMKNRRSITVEQHIGNIFMFSKVANA. The helical transmembrane segment at 103-125 threads the bilayer; that stretch reads ILFFRLDIRMGLLYITLCIVFLM. The region spanning 114–270 is the Thioredoxin domain; it reads LLYITLCIVF…YQRAKKPSKA (157 aa). Topologically, residues 126–296 are cytoplasmic; that stretch reads TCEPPLYMGP…VSDGENKKDK (171 aa). A phosphoserine mark is found at Ser211, Ser243, and Ser288. Residues 266-296 form a disordered region; the sequence is KPSKAGDSIPEEQPVASAPTTVSDGENKKDK. The short motif at 293–296 is the Di-lysine motif element; sequence KKDK.

As to quaternary structure, monomer. Homodimer; disulfide-linked. Occurs in both reduced and oxidized monomeric form. Oxidative conditions increase homodimerization. Interacts with CANX. Interacts with ATP2A2.

The protein localises to the endoplasmic reticulum membrane. Its subcellular location is the mitochondrion membrane. Functionally, endoplasmic reticulum and mitochondria-associated protein that probably functions as a regulator of cellular redox state and thereby regulates protein post-translational modification, protein folding and mitochondrial activity. Indirectly regulates neuronal proliferation, migration, and organization in the developing brain. This Pongo abelii (Sumatran orangutan) protein is Thioredoxin-related transmembrane protein 2 (TMX2).